We begin with the raw amino-acid sequence, 342 residues long: uncharacterized protein (342 aa).

The Zn(2+) site is built by C41, H63, C94, C97, C100, C108, and E149.

It belongs to the zinc-containing alcohol dehydrogenase family. It depends on Zn(2+) as a cofactor.

This is an uncharacterized protein from Haemophilus influenzae (strain ATCC 51907 / DSM 11121 / KW20 / Rd).